A 211-amino-acid chain; its full sequence is Transcriptional regulator GfcR (211 aa).

The protein belongs to the purine/pyrimidine phosphoribosyltransferase family. GfcR subfamily.

Functionally, DNA-binding transcriptional regulator that functions as a regulator of central sugar catabolic pathways. This Halorubrum lacusprofundi (strain ATCC 49239 / DSM 5036 / JCM 8891 / ACAM 34) protein is Transcriptional regulator GfcR.